A 76-amino-acid chain; its full sequence is Large ribosomal subunit protein bL28 (76 aa).

Positions 21 to 42 (RGKAKKEGGVGKHITKTSRRRQ) are disordered. Over residues 33-42 (HITKTSRRRQ) the composition is skewed to basic residues.

The protein belongs to the bacterial ribosomal protein bL28 family.

The chain is Large ribosomal subunit protein bL28 from Halothermothrix orenii (strain H 168 / OCM 544 / DSM 9562).